The sequence spans 481 residues: Alginate biosynthesis protein AlgA (481 aa).

The protein belongs to the mannose-6-phosphate isomerase type 2 family. As to quaternary structure, monomer. It depends on Co(2+) as a cofactor.

It catalyses the reaction D-mannose 6-phosphate = D-fructose 6-phosphate. It carries out the reaction alpha-D-mannose 1-phosphate + GTP + H(+) = GDP-alpha-D-mannose + diphosphate. It functions in the pathway nucleotide-sugar biosynthesis; GDP-alpha-D-mannose biosynthesis; GDP-alpha-D-mannose from alpha-D-mannose 1-phosphate (GTP route): step 1/1. It participates in nucleotide-sugar biosynthesis; GDP-alpha-D-mannose biosynthesis; alpha-D-mannose 1-phosphate from D-fructose 6-phosphate: step 1/2. Functionally, produces a precursor for alginate polymerization. The alginate layer provides a protective barrier against host immune defenses and antibiotics. This is Alginate biosynthesis protein AlgA (algA) from Pseudomonas aeruginosa (strain ATCC 15692 / DSM 22644 / CIP 104116 / JCM 14847 / LMG 12228 / 1C / PRS 101 / PAO1).